Reading from the N-terminus, the 354-residue chain is Probable serine acetyltransferase 2 (354 aa).

It belongs to the transferase hexapeptide repeat family. As to quaternary structure, homomultimer.

It carries out the reaction L-serine + acetyl-CoA = O-acetyl-L-serine + CoA. It participates in amino-acid biosynthesis; L-cysteine biosynthesis; L-cysteine from L-serine: step 1/2. The sequence is that of Probable serine acetyltransferase 2 (SAT2) from Oryza sativa subsp. japonica (Rice).